The following is a 316-amino-acid chain: Beta-galactosidase small subunit (316 aa).

It belongs to the bacterial beta-galactosidase small subunit family. Heterodimer of a large (LacL) and a small subunit (LacM).

The catalysed reaction is Hydrolysis of terminal non-reducing beta-D-galactose residues in beta-D-galactosides.. Functionally, component of a beta-galactosidase. The polypeptide is Beta-galactosidase small subunit (lacM) (Lactobacillus acidophilus (strain ATCC 700396 / NCK56 / N2 / NCFM)).